The sequence spans 410 residues: Argininosuccinate synthase (410 aa).

6 to 14 (AYSGGLDTS) lines the ATP pocket. Y84 contributes to the L-citrulline binding site. ATP is bound at residue G114. Residues T116, N120, and D121 each coordinate L-aspartate. N120 lines the L-citrulline pocket. Residues R124, S169, S178, E254, and Y266 each coordinate L-citrulline.

It belongs to the argininosuccinate synthase family. Type 1 subfamily. In terms of assembly, homotetramer.

Its subcellular location is the cytoplasm. It carries out the reaction L-citrulline + L-aspartate + ATP = 2-(N(omega)-L-arginino)succinate + AMP + diphosphate + H(+). It functions in the pathway amino-acid biosynthesis; L-arginine biosynthesis; L-arginine from L-ornithine and carbamoyl phosphate: step 2/3. The polypeptide is Argininosuccinate synthase (Pyrococcus furiosus (strain ATCC 43587 / DSM 3638 / JCM 8422 / Vc1)).